Reading from the N-terminus, the 56-residue chain is Large ribosomal subunit protein uL30 (56 aa).

This sequence belongs to the universal ribosomal protein uL30 family. Part of the 50S ribosomal subunit.

This is Large ribosomal subunit protein uL30 from Nitratidesulfovibrio vulgaris (strain ATCC 29579 / DSM 644 / CCUG 34227 / NCIMB 8303 / VKM B-1760 / Hildenborough) (Desulfovibrio vulgaris).